Reading from the N-terminus, the 228-residue chain is Cytochrome b-c1 complex subunit Rieske, mitochondrial (228 aa).

A mitochondrion-targeting transit peptide spans 1-26; sequence MLAKQFISKSLASSLRRLLPVSSTAS. At 27 to 63 the chain is on the mitochondrial matrix side; that stretch reads SLKGSMMTIPKFTSIRTYTDSPEMPDFSEYQTKSTGD. The chain crosses the membrane as a helical span at residues 64–93; that stretch reads RSRVISYAMVGTMGALTAAGAQATVHDFLA. Residues 94–228 lie on the Mitochondrial intermembrane side of the membrane; it reads SWSASADVLA…TFEGSKIIIG (135 aa). The Rieske domain maps to 139-227; that stretch reads IQEANSVDIS…YTFEGSKIII (89 aa). Residues C172, H174, C191, and H194 each contribute to the [2Fe-2S] cluster site. Cysteines 177 and 193 form a disulfide.

The protein belongs to the Rieske iron-sulfur protein family. As to quaternary structure, component of the ubiquinol-cytochrome c oxidoreductase (cytochrome b-c1 complex, complex III, CIII), a multisubunit enzyme composed of 3 respiratory subunits cytochrome b, cytochrome c1 and Rieske protein, 2 core protein subunits, and additional low-molecular weight protein subunits. The complex exists as an obligatory dimer and forms supercomplexes (SCs) in the inner mitochondrial membrane with cytochrome c oxidase (complex IV, CIV). It depends on [2Fe-2S] cluster as a cofactor.

It localises to the mitochondrion inner membrane. The enzyme catalyses a quinol + 2 Fe(III)-[cytochrome c](out) = a quinone + 2 Fe(II)-[cytochrome c](out) + 2 H(+)(out). Its function is as follows. Component of the ubiquinol-cytochrome c oxidoreductase, a multisubunit transmembrane complex that is part of the mitochondrial electron transport chain which drives oxidative phosphorylation. The respiratory chain contains 3 multisubunit complexes succinate dehydrogenase (complex II, CII), ubiquinol-cytochrome c oxidoreductase (cytochrome b-c1 complex, complex III, CIII) and cytochrome c oxidase (complex IV, CIV), that cooperate to transfer electrons derived from NADH and succinate to molecular oxygen, creating an electrochemical gradient over the inner membrane that drives transmembrane transport and the ATP synthase. The cytochrome b-c1 complex catalyzes electron transfer from ubiquinol to cytochrome c, linking this redox reaction to translocation of protons across the mitochondrial inner membrane, with protons being carried across the membrane as hydrogens on the quinol. In the process called Q cycle, 2 protons are consumed from the matrix, 4 protons are released into the intermembrane space and 2 electrons are passed to cytochrome c. The Rieske protein is a catalytic core subunit containing a [2Fe-2S] iron-sulfur cluster. It cycles between 2 conformational states during catalysis to transfer electrons from the quinol bound in the Q(0) site in cytochrome b to cytochrome c1. This Schizosaccharomyces pombe (strain 972 / ATCC 24843) (Fission yeast) protein is Cytochrome b-c1 complex subunit Rieske, mitochondrial (rip1).